A 728-amino-acid polypeptide reads, in one-letter code: Probable LRR receptor-like serine/threonine-protein kinase At1g14390 (728 aa).

An N-terminal signal peptide occupies residues 1 to 27 (MHSSSKSQAFSLTFLLFLFLLPSVSES). The Extracellular segment spans residues 28–356 (QLISSESRTL…EEDTGIELGL (329 aa)). N-linked (GlcNAc...) asparagine glycosylation is found at asparagine 55 and asparagine 85. LRR repeat units lie at residues 74 to 96 (NGHVTELTVTGNRTVKLPGRFSS), 106 to 130 (LSNLKTLSLVSLGISGPLPSQIIRL), 131 to 155 (SSSLQSLNLSSNFISGNIPKEISSL), 157 to 178 (NLRSLVLANNLFNGSVPDLRGL), 179 to 202 (SNLQELNLGGNKLGPEVVPSLASN), 204 to 224 (ITISLKNNSFGSKIPEQIKKL), 225 to 248 (NKLQSLDLSSNKFTGSIPRFLLSL), 249 to 272 (PSLQNLSLAQNLLSGSLPNSSLCN), and 274 to 295 (KLRILDVSRNLLTGKLPSCFSS). N-linked (GlcNAc...) asparagine glycans are attached at residues asparagine 138 and asparagine 169. Asparagine 210 carries N-linked (GlcNAc...) asparagine glycosylation. Asparagine 253 and asparagine 267 each carry an N-linked (GlcNAc...) asparagine glycan. The chain crosses the membrane as a helical span at residues 357–377 (VIGIIIGVILVSAVLAGLVLV). Residues 378–728 (RMRKSRSKEE…ENLGLGGSEL (351 aa)) lie on the Cytoplasmic side of the membrane. The 289-residue stretch at 421–709 (TMRSAVIGLS…DVVWNLQYTI (289 aa)) folds into the Protein kinase domain.

Belongs to the protein kinase superfamily. Ser/Thr protein kinase family.

It is found in the membrane. The enzyme catalyses L-seryl-[protein] + ATP = O-phospho-L-seryl-[protein] + ADP + H(+). It carries out the reaction L-threonyl-[protein] + ATP = O-phospho-L-threonyl-[protein] + ADP + H(+). This chain is Probable LRR receptor-like serine/threonine-protein kinase At1g14390, found in Arabidopsis thaliana (Mouse-ear cress).